A 506-amino-acid chain; its full sequence is 2,3-bisphosphoglycerate-independent phosphoglycerate mutase (506 aa).

The Mn(2+) site is built by aspartate 9 and serine 59. Serine 59 acts as the Phosphoserine intermediate in catalysis. Substrate-binding positions include histidine 120, 149–150, arginine 181, arginine 187, 254–257, and lysine 327; these read RD and RADR. Residues aspartate 394, histidine 398, aspartate 435, histidine 436, and histidine 452 each contribute to the Mn(2+) site.

Belongs to the BPG-independent phosphoglycerate mutase family. The cofactor is Mn(2+).

It carries out the reaction (2R)-2-phosphoglycerate = (2R)-3-phosphoglycerate. Its pathway is carbohydrate degradation; glycolysis; pyruvate from D-glyceraldehyde 3-phosphate: step 3/5. In terms of biological role, catalyzes the interconversion of 2-phosphoglycerate and 3-phosphoglycerate. This chain is 2,3-bisphosphoglycerate-independent phosphoglycerate mutase, found in Natronomonas pharaonis (strain ATCC 35678 / DSM 2160 / CIP 103997 / JCM 8858 / NBRC 14720 / NCIMB 2260 / Gabara) (Halobacterium pharaonis).